Consider the following 320-residue polypeptide: Cytochrome f (320 aa).

The first 35 residues, 1-35 (MQNRNTFSWVKEPINRSISVLIIIYVITQTSISNA), serve as a signal peptide directing secretion. Tyrosine 36, cysteine 56, cysteine 59, and histidine 60 together coordinate heme. Residues 286–306 (VQGLLFFLASVTLAQIFLVLK) traverse the membrane as a helical segment.

Belongs to the cytochrome f family. In terms of assembly, the 4 large subunits of the cytochrome b6-f complex are cytochrome b6, subunit IV (17 kDa polypeptide, petD), cytochrome f and the Rieske protein, while the 4 small subunits are PetG, PetL, PetM and PetN. The complex functions as a dimer. The cofactor is heme.

It is found in the plastid. It localises to the chloroplast thylakoid membrane. Functionally, component of the cytochrome b6-f complex, which mediates electron transfer between photosystem II (PSII) and photosystem I (PSI), cyclic electron flow around PSI, and state transitions. This is Cytochrome f from Piper cenocladum (Ant piper).